We begin with the raw amino-acid sequence, 349 residues long: Threonine-rich protein (349 aa).

The first 19 residues, 1–19 (MKGLTLACIAATVVAASHA), serve as a signal peptide directing secretion. An N-linked (GlcNAc...) asparagine glycan is attached at N257. Positions 300 to 326 (QPDVSPMSVRKRRQAESAEEDDDLVGD) are disordered. Residues 316-326 (SAEEDDDLVGD) show a composition bias toward acidic residues. The stretch at 316–349 (SAEEDDDLVGDMEDLKELEQEIQEALEEVEKLDV) forms a coiled coil.

As to expression, component of the acid-insoluble and acid-soluble organic matrix of calcified layers of the shell (at protein level).

It is found in the secreted. This chain is Threonine-rich protein, found in Lottia gigantea (Giant owl limpet).